A 99-amino-acid polypeptide reads, in one-letter code: Protein Tat (99 aa).

Residues 1 to 20 (MELVDPNLDPWNHPGSQPTT) are disordered. The interval 1–24 (MELVDPNLDPWNHPGSQPTTPCTR) is interaction with human CREBBP. The transactivation stretch occupies residues 1 to 48 (MELVDPNLDPWNHPGSQPTTPCTRCYCKWCCFHCYWCFTTKGLGISYG). Residues Cys22, Cys25, and Cys27 each contribute to the Zn(2+) site. The interval 22 to 37 (CTRCYCKWCCFHCYWC) is cysteine-rich. Position 28 is an N6-acetyllysine; by host PCAF (Lys28). Cys30, His33, Cys34, and Cys37 together coordinate Zn(2+). The core stretch occupies residues 38–48 (FTTKGLGISYG). The interval 48–99 (GRKKRRQRPRTPQSSQIHQDFVPKQPISQARGNPTGPKESKKEVESKAKTDP) is disordered. The Nuclear localization signal, RNA-binding (TAR), and protein transduction signature appears at 49-57 (RKKRRQRPR). Residues 49-86 (RKKRRQRPRTPQSSQIHQDFVPKQPISQARGNPTGPKE) form an interaction with the host capping enzyme RNGTT region. Lys50 and Lys51 each carry N6-acetyllysine; by host EP300 and GCN5L2. Asymmetric dimethylarginine; by host PRMT6 is present on residues Arg52 and Arg53. Lys71 is covalently cross-linked (Glycyl lysine isopeptide (Lys-Gly) (interchain with G-Cter in ubiquitin)). Residues 85–99 (KESKKEVESKAKTDP) show a composition bias toward basic and acidic residues.

This sequence belongs to the lentiviruses Tat family. In terms of assembly, interacts with host CCNT1. Associates with the P-TEFb complex composed at least of Tat, P-TEFb (CDK9 and CCNT1), TAR RNA, RNA Pol II. Recruits the HATs CREBBP, TAF1/TFIID, EP300, PCAF and GCN5L2. Interacts with host KAT5/Tip60; this interaction targets the latter to degradation. Interacts with the host deacetylase SIRT1. Interacts with host capping enzyme RNGTT; this interaction stimulates RNGTT. Binds to host KDR, and to the host integrins ITGAV/ITGB3 and ITGA5/ITGB1. Interacts with host KPNB1/importin beta-1 without previous binding to KPNA1/importin alpha-1. Interacts with EIF2AK2. Interacts with host nucleosome assembly protein NAP1L1; this interaction may be required for the transport of Tat within the nucleus, since the two proteins interact at the nuclear rim. Interacts with host C1QBP/SF2P32; this interaction involves lysine-acetylated Tat. Interacts with the host chemokine receptors CCR2, CCR3 and CXCR4. Interacts with host DPP4/CD26; this interaction may trigger an anti-proliferative effect. Interacts with host LDLR. Interacts with the host extracellular matrix metalloproteinase MMP1. Interacts with host PRMT6; this interaction mediates Tat's methylation. Interacts with, and is ubiquitinated by MDM2/Hdm2. Interacts with host PSMC3 and HTATIP2. Interacts with STAB1; this interaction may overcome SATB1-mediated repression of IL2 and IL2RA (interleukin) in T cells by binding to the same domain than HDAC1. Interacts (when acetylated) with human CDK13, thereby increasing HIV-1 mRNA splicing and promoting the production of the doubly spliced HIV-1 protein Nef. Interacts with host TBP; this interaction modulates the activity of transcriptional pre-initiation complex. Interacts with host RELA. Interacts with host PLSCR1; this interaction negatively regulates Tat transactivation activity by altering its subcellular distribution. Post-translationally, asymmetrical arginine methylation by host PRMT6 seems to diminish the transactivation capacity of Tat and affects the interaction with host CCNT1. In terms of processing, acetylation by EP300, CREBBP, GCN5L2/GCN5 and PCAF regulates the transactivation activity of Tat. EP300-mediated acetylation of Lys-50 promotes dissociation of Tat from the TAR RNA through the competitive binding to PCAF's bromodomain. In addition, the non-acetylated Tat's N-terminus can also interact with PCAF. PCAF-mediated acetylation of Lys-28 enhances Tat's binding to CCNT1. Lys-50 is deacetylated by SIRT1. Polyubiquitination by host MDM2 does not target Tat to degradation, but activates its transactivation function and fosters interaction with CCNT1 and TAR RNA. Post-translationally, phosphorylated by EIF2AK2 on serine and threonine residues adjacent to the basic region important for TAR RNA binding and function. Phosphorylation of Tat by EIF2AK2 is dependent on the prior activation of EIF2AK2 by dsRNA.

It is found in the host nucleus. Its subcellular location is the host nucleolus. The protein resides in the host cytoplasm. It localises to the secreted. Its function is as follows. Transcriptional activator that increases RNA Pol II processivity, thereby increasing the level of full-length viral transcripts. Recognizes a hairpin structure at the 5'-LTR of the nascent viral mRNAs referred to as the transactivation responsive RNA element (TAR) and recruits the cyclin T1-CDK9 complex (P-TEFb complex) that will in turn hyperphosphorylate the RNA polymerase II to allow efficient elongation. The CDK9 component of P-TEFb and other Tat-activated kinases hyperphosphorylate the C-terminus of RNA Pol II that becomes stabilized and much more processive. Other factors such as HTATSF1/Tat-SF1, SUPT5H/SPT5, and HTATIP2 are also important for Tat's function. Besides its effect on RNA Pol II processivity, Tat induces chromatin remodeling of proviral genes by recruiting the histone acetyltransferases (HATs) CREBBP, EP300 and PCAF to the chromatin. This also contributes to the increase in proviral transcription rate, especially when the provirus integrates in transcriptionally silent region of the host genome. To ensure maximal activation of the LTR, Tat mediates nuclear translocation of NF-kappa-B by interacting with host RELA. Through its interaction with host TBP, Tat may also modulate transcription initiation. Tat can reactivate a latently infected cell by penetrating in it and transactivating its LTR promoter. In the cytoplasm, Tat is thought to act as a translational activator of HIV-1 mRNAs. Extracellular circulating Tat can be endocytosed by surrounding uninfected cells via the binding to several surface receptors such as CD26, CXCR4, heparan sulfate proteoglycans (HSPG) or LDLR. Neurons are rarely infected, but they internalize Tat via their LDLR. Through its interaction with nuclear HATs, Tat is potentially able to control the acetylation-dependent cellular gene expression. Modulates the expression of many cellular genes involved in cell survival, proliferation or in coding for cytokines or cytokine receptors. Tat plays a role in T-cell and neurons apoptosis. Tat induced neurotoxicity and apoptosis probably contribute to neuroAIDS. Circulating Tat also acts as a chemokine-like and/or growth factor-like molecule that binds to specific receptors on the surface of the cells, affecting many cellular pathways. In the vascular system, Tat binds to ITGAV/ITGB3 and ITGA5/ITGB1 integrins dimers at the surface of endothelial cells and competes with bFGF for heparin-binding sites, leading to an excess of soluble bFGF. This is Protein Tat from Homo sapiens (Human).